Consider the following 361-residue polypeptide: UPF0283 membrane protein Smed_1530 (361 aa).

The segment at 1–40 (MNDDSNGRRRRPAAFPVGTEDATSRELEQTPRRAPGSFSD) is disordered. A compositionally biased stretch (basic and acidic residues) spans 22-31 (ATSRELEQTP). The next 2 helical transmembrane spans lie at 76–96 (FGKI…GLWV) and 109–129 (WLGY…LIVV).

It belongs to the UPF0283 family.

It is found in the cell inner membrane. The protein is UPF0283 membrane protein Smed_1530 of Sinorhizobium medicae (strain WSM419) (Ensifer medicae).